We begin with the raw amino-acid sequence, 380 residues long: Chaperone protein DnaJ (380 aa).

The 66-residue stretch at 5–70 folds into the J domain; it reads DYYEVLGLQK…EKRAAYDQYG (66 aa). The segment at 136–214 adopts a CR-type zinc-finger fold; the sequence is GCKKDIRIST…CHGDGRVQKA (79 aa). Positions 149, 152, 166, 169, 188, 191, 202, and 205 each coordinate Zn(2+). CXXCXGXG motif repeat units follow at residues 149 to 156, 166 to 173, 188 to 195, and 202 to 209; these read CDTCHGSG, CSHCHGSG, CPSCHGSG, and CKSCHGDG.

This sequence belongs to the DnaJ family. As to quaternary structure, homodimer. Requires Zn(2+) as cofactor.

The protein localises to the cytoplasm. In terms of biological role, participates actively in the response to hyperosmotic and heat shock by preventing the aggregation of stress-denatured proteins and by disaggregating proteins, also in an autonomous, DnaK-independent fashion. Unfolded proteins bind initially to DnaJ; upon interaction with the DnaJ-bound protein, DnaK hydrolyzes its bound ATP, resulting in the formation of a stable complex. GrpE releases ADP from DnaK; ATP binding to DnaK triggers the release of the substrate protein, thus completing the reaction cycle. Several rounds of ATP-dependent interactions between DnaJ, DnaK and GrpE are required for fully efficient folding. Also involved, together with DnaK and GrpE, in the DNA replication of plasmids through activation of initiation proteins. This chain is Chaperone protein DnaJ, found in Actinobacillus pleuropneumoniae serotype 5b (strain L20).